Here is a 250-residue protein sequence, read N- to C-terminus: 5-oxoprolinase subunit A (250 aa).

This sequence belongs to the LamB/PxpA family. In terms of assembly, forms a complex composed of PxpA, PxpB and PxpC.

The catalysed reaction is 5-oxo-L-proline + ATP + 2 H2O = L-glutamate + ADP + phosphate + H(+). Its function is as follows. Catalyzes the cleavage of 5-oxoproline to form L-glutamate coupled to the hydrolysis of ATP to ADP and inorganic phosphate. This is 5-oxoprolinase subunit A from Streptomyces coelicolor (strain ATCC BAA-471 / A3(2) / M145).